The following is a 308-amino-acid chain: MKNLDHIAASVDWEKESLPEYQDLIFLLFFALFFPVLRFILDRFVFEALAKRMIFGKKTVVNINGREERKKINKFKESAWKFVYFLSTELLALSVTCNEPWFTDSRYFWAGPGDVVWPNLKMKLKLKLLYMYAGGFYFYSIFATLYWETRRYDFAAQIIHHVTTVSLIVLSYVYGFARIGSVVLALHDGSDVFMEIAKMSKYSGFDLIADIFFSLFALVFTSLRIICYPFWIIRSTCYELLYVLDIQKERTTGIILYFVFNALLICLLVLHLFWFKIILRMVKNQILSRGHITDDVREDSESDDDHKD.

The next 6 membrane-spanning stretches (helical) occupy residues 21 to 41, 82 to 102, 128 to 148, 165 to 185, 213 to 233, and 254 to 274; these read YQDL…RFIL, FVYF…EPWF, LLYM…LYWE, VSLI…VVLA, FSLF…FWII, and IILY…HLFW. The TLC domain maps to 73–287; sequence NKFKESAWKF…ILRMVKNQIL (215 aa).

It is found in the endoplasmic reticulum membrane. In terms of biological role, mediates resistance to sphinganine-analog mycotoxins (SAMs) by restoring the sphingolipid biosynthesis. Could salvage the transport of GPI-anchored proteins from the endoplasmic reticulum to the Golgi apparatus in ceramides-depleted cells after SAM exposure. The sequence is that of Alternaria stem canker resistance protein 1 from Solanum lycopersicum (Tomato).